Reading from the N-terminus, the 720-residue chain is Ornithine decarboxylase (720 aa).

K354 carries the N6-(pyridoxal phosphate)lysine modification.

It belongs to the Orn/Lys/Arg decarboxylase class-I family. It depends on pyridoxal 5'-phosphate as a cofactor.

It carries out the reaction L-ornithine + H(+) = putrescine + CO2. The sequence is that of Ornithine decarboxylase (speF) from Haemophilus influenzae (strain ATCC 51907 / DSM 11121 / KW20 / Rd).